Here is a 432-residue protein sequence, read N- to C-terminus: MYYCISFTHKNTDIALREKLSFSNEAKKSEFLKIISTHENIEECLVISTCNRVEIVAFVKMACAEFIVKSLALLCDVDKDILLEKADIFEDSGAIHHLFSVASSLDSLVVGETQIAGQLKDAFAFAVKNNFCGVHLSRAVHSAFKCAAKVRNETQISKNSISVASVAVAKAKELADLTQKKAVVIGAGEMGELVAKHLIAAGAKVIILNRDLQKAKDLCERLGVLSEYDSLENLKKYLNQYEFFFSATNAPNAIITNSLIEELSYKRYFFDIAVPRDIDINENENISVFAVDDLEIVVQKNLALREQEARMAYGIIGRETSEFFRYLNDLALMPIIKAIRLQAKEYADKQLEIALKKGYLKKSDKEEARKLIHQVFKAFLHTPTVNLKHLQGKMQSDTVINAMRYVFDLQNNLEGLNQYKCEFDMENNDEIY.

Residues 49–52, Ser-107, 112–114, and Gln-118 each bind substrate; these read TCNR and ETQ. Cys-50 serves as the catalytic Nucleophile. Residue 186 to 191 coordinates NADP(+); it reads GAGEMG.

It belongs to the glutamyl-tRNA reductase family. Homodimer.

The catalysed reaction is (S)-4-amino-5-oxopentanoate + tRNA(Glu) + NADP(+) = L-glutamyl-tRNA(Glu) + NADPH + H(+). It functions in the pathway porphyrin-containing compound metabolism; protoporphyrin-IX biosynthesis; 5-aminolevulinate from L-glutamyl-tRNA(Glu): step 1/2. In terms of biological role, catalyzes the NADPH-dependent reduction of glutamyl-tRNA(Glu) to glutamate 1-semialdehyde (GSA). This Campylobacter jejuni (strain RM1221) protein is Glutamyl-tRNA reductase.